A 160-amino-acid chain; its full sequence is Putative 4-hydroxy-4-methyl-2-oxoglutarate aldolase (160 aa).

Substrate-binding positions include 75 to 78 (GDQL) and arginine 97. An a divalent metal cation-binding site is contributed by aspartate 98.

This sequence belongs to the class II aldolase/RraA-like family. In terms of assembly, homotrimer. The cofactor is a divalent metal cation.

It carries out the reaction 4-hydroxy-4-methyl-2-oxoglutarate = 2 pyruvate. It catalyses the reaction oxaloacetate + H(+) = pyruvate + CO2. Catalyzes the aldol cleavage of 4-hydroxy-4-methyl-2-oxoglutarate (HMG) into 2 molecules of pyruvate. Also contains a secondary oxaloacetate (OAA) decarboxylase activity due to the common pyruvate enolate transition state formed following C-C bond cleavage in the retro-aldol and decarboxylation reactions. This is Putative 4-hydroxy-4-methyl-2-oxoglutarate aldolase from Vibrio parahaemolyticus serotype O3:K6 (strain RIMD 2210633).